Reading from the N-terminus, the 58-residue chain is Probable mRNA interferase HicA 2 (58 aa).

This sequence belongs to the HicA mRNA interferase family. In terms of assembly, probably forms a complex with the cognate antitoxin HicB 2 which inhibits the mRNA interferase activity.

Its function is as follows. Toxic component of a type II toxin-antitoxin (TA) system. A probable translation-independent mRNA interferase. The sequence is that of Probable mRNA interferase HicA 2 (hicA2) from Photorhabdus laumondii subsp. laumondii (strain DSM 15139 / CIP 105565 / TT01) (Photorhabdus luminescens subsp. laumondii).